The following is an 87-amino-acid chain: uncharacterized protein (87 aa).

A signal peptide spans 1-22 (MKIKTTVAALSVLSVLSFGAFA).

Belongs to the BhsA/McbA family.

It localises to the periplasm. This is an uncharacterized protein from Escherichia coli O6:H1 (strain CFT073 / ATCC 700928 / UPEC).